A 297-amino-acid polypeptide reads, in one-letter code: 33 kDa chaperonin (297 aa).

Intrachain disulfides connect C239-C241 and C272-C275.

It belongs to the HSP33 family. Post-translationally, under oxidizing conditions two disulfide bonds are formed involving the reactive cysteines. Under reducing conditions zinc is bound to the reactive cysteines and the protein is inactive.

It localises to the cytoplasm. In terms of biological role, redox regulated molecular chaperone. Protects both thermally unfolding and oxidatively damaged proteins from irreversible aggregation. Plays an important role in the bacterial defense system toward oxidative stress. The sequence is that of 33 kDa chaperonin from Clostridium acetobutylicum (strain ATCC 824 / DSM 792 / JCM 1419 / IAM 19013 / LMG 5710 / NBRC 13948 / NRRL B-527 / VKM B-1787 / 2291 / W).